The primary structure comprises 109 residues: B melanoma antigen 2 (109 aa).

The first 17 residues, 1–17, serve as a signal peptide directing secretion; sequence MAAGVVFLALSAQLLQA.

The protein belongs to the BAGE family. Not expressed in normal tissues except in testis. Expressed in 22% of melanomas, in bladder and lung carcinomas.

The protein localises to the secreted. Unknown. Candidate gene encoding tumor antigens. In Homo sapiens (Human), this protein is B melanoma antigen 2 (BAGE2).